The chain runs to 279 residues: Ribonuclease Z (279 aa).

Residues His-64, His-66, Asp-68, His-69, His-134, Asp-191, and His-245 each coordinate Zn(2+). Asp-68 functions as the Proton acceptor in the catalytic mechanism.

The protein belongs to the RNase Z family. In terms of assembly, homodimer. Zn(2+) serves as cofactor.

The enzyme catalyses Endonucleolytic cleavage of RNA, removing extra 3' nucleotides from tRNA precursor, generating 3' termini of tRNAs. A 3'-hydroxy group is left at the tRNA terminus and a 5'-phosphoryl group is left at the trailer molecule.. Functionally, zinc phosphodiesterase, which displays some tRNA 3'-processing endonuclease activity. Probably involved in tRNA maturation, by removing a 3'-trailer from precursor tRNA. This is Ribonuclease Z from Methanopyrus kandleri (strain AV19 / DSM 6324 / JCM 9639 / NBRC 100938).